We begin with the raw amino-acid sequence, 138 residues long: Small ribosomal subunit protein uS12 (138 aa).

3-methylthioaspartic acid is present on D89. The interval V107–K138 is disordered.

It belongs to the universal ribosomal protein uS12 family. Part of the 30S ribosomal subunit. Contacts proteins S8 and S17. May interact with IF1 in the 30S initiation complex.

Its function is as follows. With S4 and S5 plays an important role in translational accuracy. Interacts with and stabilizes bases of the 16S rRNA that are involved in tRNA selection in the A site and with the mRNA backbone. Located at the interface of the 30S and 50S subunits, it traverses the body of the 30S subunit contacting proteins on the other side and probably holding the rRNA structure together. The combined cluster of proteins S8, S12 and S17 appears to hold together the shoulder and platform of the 30S subunit. This is Small ribosomal subunit protein uS12 from Azobacteroides pseudotrichonymphae genomovar. CFP2.